Reading from the N-terminus, the 647-residue chain is Putative lipase YDL109C (647 aa).

S274 serves as the catalytic Charge relay system. Residues 502–523 form a disordered region; the sequence is PPPSPTLYEGTAAKEGETRKTR. Residues 513-523 show a composition bias toward basic and acidic residues; sequence AAKEGETRKTR.

The protein belongs to the putative lipase ROG1 family.

In terms of biological role, involved in lipid metabolism. This is Putative lipase YDL109C from Saccharomyces cerevisiae (strain ATCC 204508 / S288c) (Baker's yeast).